The primary structure comprises 453 residues: Ribosomal protein uS12 methylthiotransferase RimO (453 aa).

The region spanning 5 to 120 (PKVGFVSLGC…VMQAVHSHLP (116 aa)) is the MTTase N-terminal domain. Residues Cys14, Cys50, Cys79, Cys151, Cys155, and Cys158 each contribute to the [4Fe-4S] cluster site. The Radical SAM core domain occupies 137–382 (LTPRHYAYLK…MEVAEEVSAN (246 aa)). The 69-residue stretch at 385–453 (QRKVGKTLKV…ADGHDLWGEV (69 aa)) folds into the TRAM domain.

Belongs to the methylthiotransferase family. RimO subfamily. Requires [4Fe-4S] cluster as cofactor.

It is found in the cytoplasm. The enzyme catalyses L-aspartate(89)-[ribosomal protein uS12]-hydrogen + (sulfur carrier)-SH + AH2 + 2 S-adenosyl-L-methionine = 3-methylsulfanyl-L-aspartate(89)-[ribosomal protein uS12]-hydrogen + (sulfur carrier)-H + 5'-deoxyadenosine + L-methionine + A + S-adenosyl-L-homocysteine + 2 H(+). In terms of biological role, catalyzes the methylthiolation of an aspartic acid residue of ribosomal protein uS12. The chain is Ribosomal protein uS12 methylthiotransferase RimO from Burkholderia cenocepacia (strain HI2424).